We begin with the raw amino-acid sequence, 217 residues long: 3,4-dihydroxy-2-butanone 4-phosphate synthase (217 aa).

D-ribulose 5-phosphate is bound by residues 37 to 38 (RE), D42, 150 to 154 (RQGHT), and E174. E38 contributes to the Mg(2+) binding site. Residue H153 participates in Mg(2+) binding.

Belongs to the DHBP synthase family. Homodimer. It depends on Mg(2+) as a cofactor. Requires Mn(2+) as cofactor.

The enzyme catalyses D-ribulose 5-phosphate = (2S)-2-hydroxy-3-oxobutyl phosphate + formate + H(+). The protein operates within cofactor biosynthesis; riboflavin biosynthesis; 2-hydroxy-3-oxobutyl phosphate from D-ribulose 5-phosphate: step 1/1. Its function is as follows. Catalyzes the conversion of D-ribulose 5-phosphate to formate and 3,4-dihydroxy-2-butanone 4-phosphate. The chain is 3,4-dihydroxy-2-butanone 4-phosphate synthase from Desulforamulus reducens (strain ATCC BAA-1160 / DSM 100696 / MI-1) (Desulfotomaculum reducens).